The following is a 280-amino-acid chain: Large ribosomal subunit protein uL2 (280 aa).

2 disordered regions span residues 27-59 (STPE…GGHK) and 225-280 (VMNP…KHSR). 2 stretches are compositionally biased toward basic residues: residues 37 to 59 (LHGR…GGHK) and 268 to 280 (IVRR…KHSR).

This sequence belongs to the universal ribosomal protein uL2 family. As to quaternary structure, part of the 50S ribosomal subunit. Forms a bridge to the 30S subunit in the 70S ribosome.

Functionally, one of the primary rRNA binding proteins. Required for association of the 30S and 50S subunits to form the 70S ribosome, for tRNA binding and peptide bond formation. It has been suggested to have peptidyltransferase activity; this is somewhat controversial. Makes several contacts with the 16S rRNA in the 70S ribosome. This Mycobacterium bovis (strain ATCC BAA-935 / AF2122/97) protein is Large ribosomal subunit protein uL2.